The following is a 391-amino-acid chain: Ferrochelatase (391 aa).

2 residues coordinate Fe cation: histidine 196 and glutamate 281.

Belongs to the ferrochelatase family.

The protein resides in the cytoplasm. The enzyme catalyses heme b + 2 H(+) = protoporphyrin IX + Fe(2+). Its pathway is porphyrin-containing compound metabolism; protoheme biosynthesis; protoheme from protoporphyrin-IX: step 1/1. Its function is as follows. Catalyzes the ferrous insertion into protoporphyrin IX. This Prochlorococcus marinus (strain MIT 9211) protein is Ferrochelatase.